The chain runs to 196 residues: Protein TEX261 (196 aa).

Helical transmembrane passes span 3-23 (FMYLLSWLSLFIQVAFITLAV), 42-62 (SRIIKYMIWFSTAVLIGLYVF), 70-90 (IGVGLFTNLVYFGLLQTFPFI), 97-117 (FILSCGLVVVNHYLACQFFAE), and 125-145 (VLAYFTFCLWIIPFAFFVSLS).

The protein belongs to the SVP26 family.

The protein localises to the membrane. The polypeptide is Protein TEX261 (TEX261) (Pongo abelii (Sumatran orangutan)).